Reading from the N-terminus, the 345-residue chain is Phosphate acyltransferase (345 aa).

The protein belongs to the PlsX family. As to quaternary structure, homodimer. Probably interacts with PlsY.

It is found in the cytoplasm. It catalyses the reaction a fatty acyl-[ACP] + phosphate = an acyl phosphate + holo-[ACP]. Its pathway is lipid metabolism; phospholipid metabolism. Its function is as follows. Catalyzes the reversible formation of acyl-phosphate (acyl-PO(4)) from acyl-[acyl-carrier-protein] (acyl-ACP). This enzyme utilizes acyl-ACP as fatty acyl donor, but not acyl-CoA. This is Phosphate acyltransferase from Trichlorobacter lovleyi (strain ATCC BAA-1151 / DSM 17278 / SZ) (Geobacter lovleyi).